The following is a 388-amino-acid chain: Na(+)/H(+) antiporter NhaA (388 aa).

Residues 1-11 (MKHLHRFFSSD) lie on the Cytoplasmic side of the membrane. The chain crosses the membrane as a helical span at residues 12–31 (ASGGIILIIAAILAMIMANS). Topologically, residues 32-58 (GATSGWYHDFLETPVQLRVGSLEINKN) are periplasmic. Positions 45-58 (PVQLRVGSLEINKN) are important for dimerization. A helical transmembrane segment spans residues 59 to 80 (MLLWINDALMAVFFLLVGLEVK). Over 81 to 96 (RELMQGSLASLRQAAF) the chain is Cytoplasmic. A helical transmembrane segment spans residues 97–116 (PVIAAIGGMIVPALLYLAFN). Residues 117-122 (YADPIT) are Periplasmic-facing. Residues 123 to 130 (REGWAIPA) traverse the membrane as a helical segment. Over 131–154 (ATDIAFALGVLALLGSRVPLALKI) the chain is Cytoplasmic. Residues 155–176 (FLMALAIIDDLGAIIIIALFYT) form a helical membrane-spanning segment. The Periplasmic segment spans residues 177 to 180 (NDLS). A helical transmembrane segment spans residues 181–200 (MASLGVAAVAIAVLAVLNLC). Residues 201–204 (GARR) lie on the Cytoplasmic side of the membrane. The chain crosses the membrane as a helical span at residues 205–222 (TGVYILVGVVLWTAVLKS). Position 223 (Gly-223) is a topological domain, periplasmic. Residues 224-236 (VHATLAGVIVGFF) traverse the membrane as a helical segment. Over 237-253 (IPLKEKHGRSPAKRLEH) the chain is Cytoplasmic. A helical membrane pass occupies residues 254–272 (VLHPWVAYLILPLFAFANA). Topologically, residues 273 to 286 (GVSLQGVTLDGLTS) are periplasmic. A helical transmembrane segment spans residues 287-310 (ILPLGIIAGLLIGKPLGISLFCWL). Over 311–339 (ALRLKLAHLPEGTTYQQIMVVGILCGIGF) the chain is Cytoplasmic. The chain crosses the membrane as a helical span at residues 340–350 (TMSIFIASLAF). At 351-357 (GSVDPEL) the chain is on the periplasmic side. The chain crosses the membrane as a helical span at residues 358-380 (INWAKLGILVGSISSAVIGYSWL). Topologically, residues 381 to 388 (RVRLRPSV) are cytoplasmic.

It belongs to the NhaA Na(+)/H(+) (TC 2.A.33) antiporter family. Monomer. Homodimer. Under routine stress conditions, the monomeric form is fully functional. However, the dimeric form is much more efficient in conferring growth resistance under extreme stress conditions.

The protein localises to the cell inner membrane. The enzyme catalyses Na(+)(in) + 2 H(+)(out) = Na(+)(out) + 2 H(+)(in). It carries out the reaction Li(+)(in) + 2 H(+)(out) = Li(+)(out) + 2 H(+)(in). With respect to regulation, activity is regulated by pH. Active at alkaline pH. Activity is strongly down-regulated below pH 6.5 and a dramatic increase in activity is observed upon increase of the pH from 6.5 to 8.5. Functionally, na(+)/H(+) antiporter that extrudes sodium in exchange for external protons. Plays an important role in the regulation of intracellular pH, cellular Na(+) content and cell volume. Catalyzes the exchange of 2 H(+) per Na(+). This stoichiometry applies at both neutral and alkaline pH values. In addition, can also transport lithium and is involved in lithium detoxification. Binding of the Li(+) and H(+) ligands to NhaA is coupled and antagonistic. In Escherichia coli (strain K12), this protein is Na(+)/H(+) antiporter NhaA.